The sequence spans 664 residues: Putative membrane protein Bcell_0381 (664 aa).

Residues 588–616 show a composition bias toward acidic residues; that stretch reads DVTQDENGEEKSEEDNKEEIVEENTEEDN. The segment at 588–622 is disordered; sequence DVTQDENGEEKSEEDNKEEIVEENTEEDNKEEKTI. Residues 636 to 656 form a helical membrane-spanning segment; that stretch reads YQFLLAGIIMLVGGSCIYVFY.

It localises to the cell membrane. The chain is Putative membrane protein Bcell_0381 from Evansella cellulosilytica (strain ATCC 21833 / DSM 2522 / FERM P-1141 / JCM 9156 / N-4) (Bacillus cellulosilyticus).